Reading from the N-terminus, the 264-residue chain is MAPTGLLVAGASFLAFRGLHWGLRRLPTPESAARDRWQWWNLCVSLAHSLLSGTGALLGLSLYPQMAADPIHGHPRWALVLVAVSVGYFLADGADLLWNQTLGKTWDLLCHHLVVVSCLSTAVLSGHYVGFSMVSLLLELNSACLHLRKLLLLSRQAPSLAFSVTSWASLATLALFRLVPLGWMSLWLFRQHHQVPLALVTLGGIGLVTVGIMSIILGIRILVNDVLQSRPHPPSPGHEKTRGTRTRRDNGPVTSNSSTLSLKD.

The next 6 membrane-spanning stretches (helical) occupy residues 3-23 (PTGL…HWGL), 42-62 (LCVS…GLSL), 77-97 (WALV…ADLL), 114-134 (VVVS…FSMV), 169-189 (SLAT…LWLF), and 199-219 (LVTL…ILGI). Positions 34–227 (RDRWQWWNLC…GIRILVNDVL (194 aa)) constitute a TLC domain. Residues 230-264 (RPHPPSPGHEKTRGTRTRRDNGPVTSNSSTLSLKD) are disordered. A compositionally biased stretch (basic and acidic residues) spans 237–250 (GHEKTRGTRTRRDN). Polar residues predominate over residues 252-264 (PVTSNSSTLSLKD).

Belongs to the TLCD family.

The protein resides in the cell membrane. Regulates the composition and fluidity of the plasma membrane. Inhibits the incorporation of membrane-fluidizing phospholipids containing omega-3 long-chain polyunsaturated fatty acids (LCPUFA) and thereby promotes membrane rigidity. Does not appear to have any effect on LCPUFA synthesis. This chain is TLC domain-containing protein 2 (TLCD2), found in Homo sapiens (Human).